Consider the following 289-residue polypeptide: Protease HtpX homolog (289 aa).

2 helical membrane-spanning segments follow: residues 8–28 (LALLAALSGLLIAISYWVIGG) and 29–49 (SSGLMIGIGLAAVTNLLSWYQ). His-132 serves as a coordination point for Zn(2+). Glu-133 is an active-site residue. His-136 serves as a coordination point for Zn(2+). Transmembrane regions (helical) follow at residues 151-171 (VAGAISFLAQMVSYSLWFGGI) and 183-203 (LGVLLTVVLAPIAATIIQLAI). Position 208 (Glu-208) interacts with Zn(2+).

The protein belongs to the peptidase M48B family. The cofactor is Zn(2+).

The protein resides in the cell inner membrane. The sequence is that of Protease HtpX homolog from Nostoc sp. (strain PCC 7120 / SAG 25.82 / UTEX 2576).